We begin with the raw amino-acid sequence, 444 residues long: Methylenetetrahydrofolate--tRNA-(uracil-5-)-methyltransferase TrmFO (444 aa).

Gly-10–Gly-15 is a binding site for FAD.

It belongs to the MnmG family. TrmFO subfamily. Requires FAD as cofactor.

The protein resides in the cytoplasm. The catalysed reaction is uridine(54) in tRNA + (6R)-5,10-methylene-5,6,7,8-tetrahydrofolate + NADH + H(+) = 5-methyluridine(54) in tRNA + (6S)-5,6,7,8-tetrahydrofolate + NAD(+). It catalyses the reaction uridine(54) in tRNA + (6R)-5,10-methylene-5,6,7,8-tetrahydrofolate + NADPH + H(+) = 5-methyluridine(54) in tRNA + (6S)-5,6,7,8-tetrahydrofolate + NADP(+). Functionally, catalyzes the folate-dependent formation of 5-methyl-uridine at position 54 (M-5-U54) in all tRNAs. This chain is Methylenetetrahydrofolate--tRNA-(uracil-5-)-methyltransferase TrmFO, found in Streptococcus pneumoniae (strain Taiwan19F-14).